The sequence spans 374 residues: Alginate lyase (374 aa).

The signal sequence occupies residues 1-23 (MHKTRLALSCLLGSLLLSGAVHA). Substrate contacts are provided by residues 62-63 (SK), 135-136 (HT), and Y253.

This sequence belongs to the polysaccharide lyase 5 family.

The protein localises to the periplasm. The catalysed reaction is Eliminative cleavage of alginate to give oligosaccharides with 4-deoxy-alpha-L-erythro-hex-4-enuronosyl groups at their non-reducing ends and beta-D-mannuronate at their reducing end.. In terms of biological role, catalyzes the depolymerization of alginate by cleaving the beta-1,4 glycosidic bond between two adjacent sugar residues via a beta-elimination mechanism. May serve to degrade mislocalized alginate that is trapped in the periplasmic space. This Azotobacter vinelandii (strain DJ / ATCC BAA-1303) protein is Alginate lyase.